The chain runs to 224 residues: Deoxyribose-phosphate aldolase (224 aa).

Catalysis depends on D93, which acts as the Proton donor/acceptor. Catalysis depends on K159, which acts as the Schiff-base intermediate with acetaldehyde. K189 serves as the catalytic Proton donor/acceptor.

The protein belongs to the DeoC/FbaB aldolase family. DeoC type 1 subfamily.

The protein localises to the cytoplasm. The enzyme catalyses 2-deoxy-D-ribose 5-phosphate = D-glyceraldehyde 3-phosphate + acetaldehyde. It functions in the pathway carbohydrate degradation; 2-deoxy-D-ribose 1-phosphate degradation; D-glyceraldehyde 3-phosphate and acetaldehyde from 2-deoxy-alpha-D-ribose 1-phosphate: step 2/2. Catalyzes a reversible aldol reaction between acetaldehyde and D-glyceraldehyde 3-phosphate to generate 2-deoxy-D-ribose 5-phosphate. In Mycobacterium bovis (strain ATCC BAA-935 / AF2122/97), this protein is Deoxyribose-phosphate aldolase.